The chain runs to 271 residues: Formamidopyrimidine-DNA glycosylase (271 aa).

Pro-2 (schiff-base intermediate with DNA) is an active-site residue. Glu-3 (proton donor) is an active-site residue. The active-site Proton donor; for beta-elimination activity is Lys-57. Positions 90, 109, and 150 each coordinate DNA. The FPG-type zinc-finger motif lies at 235-269 (LVYGNKDKPCPKCGGKIESLIIGQRNSFFCPKCQK). Arg-259 functions as the Proton donor; for delta-elimination activity in the catalytic mechanism.

The protein belongs to the FPG family. As to quaternary structure, monomer. It depends on Zn(2+) as a cofactor.

It catalyses the reaction Hydrolysis of DNA containing ring-opened 7-methylguanine residues, releasing 2,6-diamino-4-hydroxy-5-(N-methyl)formamidopyrimidine.. It carries out the reaction 2'-deoxyribonucleotide-(2'-deoxyribose 5'-phosphate)-2'-deoxyribonucleotide-DNA = a 3'-end 2'-deoxyribonucleotide-(2,3-dehydro-2,3-deoxyribose 5'-phosphate)-DNA + a 5'-end 5'-phospho-2'-deoxyribonucleoside-DNA + H(+). Its function is as follows. Involved in base excision repair of DNA damaged by oxidation or by mutagenic agents. Acts as a DNA glycosylase that recognizes and removes damaged bases. Has a preference for oxidized purines, such as 7,8-dihydro-8-oxoguanine (8-oxoG). Has AP (apurinic/apyrimidinic) lyase activity and introduces nicks in the DNA strand. Cleaves the DNA backbone by beta-delta elimination to generate a single-strand break at the site of the removed base with both 3'- and 5'-phosphates. This chain is Formamidopyrimidine-DNA glycosylase, found in Haemophilus influenzae (strain PittEE).